Reading from the N-terminus, the 131-residue chain is Large ribosomal subunit protein mL60 (131 aa).

The N-terminal 12 residues, 1-12 (MFGPFKLTSPVA), are a transit peptide targeting the mitochondrion.

It belongs to the mitochondrion-specific ribosomal protein mL60 family. As to quaternary structure, component of the mitochondrial large ribosomal subunit (mt-LSU). Mature yeast 74S mitochondrial ribosomes consist of a small (37S) and a large (54S) subunit. The 37S small subunit contains a 15S ribosomal RNA (15S mt-rRNA) and 34 different proteins. The 54S large subunit contains a 21S rRNA (21S mt-rRNA) and 46 different proteins.

The protein resides in the mitochondrion. Its function is as follows. Component of the mitochondrial ribosome (mitoribosome), a dedicated translation machinery responsible for the synthesis of mitochondrial genome-encoded proteins, including at least some of the essential transmembrane subunits of the mitochondrial respiratory chain. The mitoribosomes are attached to the mitochondrial inner membrane and translation products are cotranslationally integrated into the membrane. The polypeptide is Large ribosomal subunit protein mL60 (MRPL31) (Saccharomyces cerevisiae (strain ATCC 204508 / S288c) (Baker's yeast)).